The chain runs to 1324 residues: Sal-like protein 1 (1324 aa).

The interval M1–A42 is disordered. Over residues P22–A42 the composition is skewed to basic and acidic residues. The C2H2-type 1; atypical zinc-finger motif lies at H43 to C65. Disordered regions lie at residues N77–V102, V108–V127, A132–I172, and P317–G336. The span at L113–S124 shows a compositional bias: basic and acidic residues. Residues S135–S158 are compositionally biased toward low complexity. Polar residues predominate over residues L321–G336. K439 is covalently cross-linked (Glycyl lysine isopeptide (Lys-Gly) (interchain with G-Cter in SUMO2)). 2 consecutive C2H2-type zinc fingers follow at residues H449–H471 and F477–H499. The segment at P577–A646 is disordered. S590, S593, and S595 each carry phosphoserine. The segment covering S633–A646 has biased composition (low complexity). Residues K673, K690, and K701 each participate in a glycyl lysine isopeptide (Lys-Gly) (interchain with G-Cter in SUMO2) cross-link. 3 C2H2-type zinc fingers span residues N706 to H728, F734 to H756, and H766 to H788. Disordered regions lie at residues G790–L856 and E894–T963. The span at Y802 to G811 shows a compositional bias: polar residues. Over residues D820–P833 the composition is skewed to acidic residues. Low complexity predominate over residues S843–L856. Polar residues predominate over residues T899–Q936. Over residues E937–Q949 the composition is skewed to basic and acidic residues. A phosphoserine mark is found at S941 and S943. Glycyl lysine isopeptide (Lys-Gly) (interchain with G-Cter in SUMO2) cross-links involve residues K947 and K982. 2 C2H2-type zinc fingers span residues T1001–H1023 and F1029–H1051. Residue K1086 forms a Glycyl lysine isopeptide (Lys-Gly) (interchain with G-Cter in SUMO2) linkage. A disordered region spans residues V1095–P1120. The span at T1105–S1119 shows a compositional bias: polar residues. 2 consecutive C2H2-type zinc fingers follow at residues H1134–H1156 and F1162–H1184. Residues K1219, K1299, and K1319 each participate in a glycyl lysine isopeptide (Lys-Gly) (interchain with G-Cter in SUMO2) cross-link.

Belongs to the sal C2H2-type zinc-finger protein family. In terms of assembly, may associate with NuRD histone deacetylase complex (HDAC). Interacts with components of HDAC complex including HDAC1, HDAC2, RBBP4, RBPP7, MTA1 and MTA2. Interacts with CCNQ. Interacts with NSD2 (via PHD-type zinc fingers 1, 2 and 3). Highest levels in kidney. Lower levels in adult brain (enriched in corpus callosum, lower expression in substantia nigra) and liver.

It localises to the nucleus. Its function is as follows. Transcriptional repressor involved in organogenesis. Plays an essential role in ureteric bud invasion during kidney development. The sequence is that of Sal-like protein 1 (SALL1) from Homo sapiens (Human).